The primary structure comprises 134 residues: Small ribosomal subunit protein uS11 (134 aa).

The disordered stretch occupies residues 1–22 (MAQKTRATAARKPRRKVNKNVT). Basic residues predominate over residues 9 to 18 (AARKPRRKVN).

Belongs to the universal ribosomal protein uS11 family. In terms of assembly, part of the 30S ribosomal subunit. Interacts with proteins S7 and S18. Binds to IF-3.

Functionally, located on the platform of the 30S subunit, it bridges several disparate RNA helices of the 16S rRNA. Forms part of the Shine-Dalgarno cleft in the 70S ribosome. This Kocuria rhizophila (strain ATCC 9341 / DSM 348 / NBRC 103217 / DC2201) protein is Small ribosomal subunit protein uS11.